A 311-amino-acid polypeptide reads, in one-letter code: MTPDLTQSAITPARLTHLQRLEAESIHILREVAAECERPVMLYSIGKDSAVMLHLAAKAFYPSKPPFPLLHIDTTWKFRDMYALRDRIGSEMGFDLLVHKNPDAQARGINPFDHGSAVHTDLWKTEGLKQALSKYGFDAAFGGARRDEEKSRAKERVFSFRSSEHRWDPKNQRPELWNLYNTRKHPGESLRVFPISNWTELDIWQYIHLENIPIVPLYFAAERPVVERDGALIMVDDDRFRLRDGEVPQMRSVRFRTLGCYPLTGAVESTAATLPQVIQEMLLATTSERQGRVIDHDQSASMEKKKQEGYF.

It belongs to the PAPS reductase family. CysD subfamily. As to quaternary structure, heterodimer composed of CysD, the smaller subunit, and CysN.

It carries out the reaction sulfate + ATP + H(+) = adenosine 5'-phosphosulfate + diphosphate. Its pathway is sulfur metabolism; hydrogen sulfide biosynthesis; sulfite from sulfate: step 1/3. With CysN forms the ATP sulfurylase (ATPS) that catalyzes the adenylation of sulfate producing adenosine 5'-phosphosulfate (APS) and diphosphate, the first enzymatic step in sulfur assimilation pathway. APS synthesis involves the formation of a high-energy phosphoric-sulfuric acid anhydride bond driven by GTP hydrolysis by CysN coupled to ATP hydrolysis by CysD. The polypeptide is Sulfate adenylyltransferase subunit 2 (Caulobacter vibrioides (strain ATCC 19089 / CIP 103742 / CB 15) (Caulobacter crescentus)).